Here is a 266-residue protein sequence, read N- to C-terminus: Putative carbamate hydrolase RutD (266 aa).

It belongs to the AB hydrolase superfamily. Hydrolase RutD family.

The catalysed reaction is carbamate + 2 H(+) = NH4(+) + CO2. In terms of biological role, involved in pyrimidine catabolism. May facilitate the hydrolysis of carbamate, a reaction that can also occur spontaneously. This chain is Putative carbamate hydrolase RutD, found in Escherichia coli O26:H11 (strain 11368 / EHEC).